Consider the following 240-residue polypeptide: Late expression factor 5 homolog (240 aa).

Belongs to the baculoviridae LEF-5 family.

Required for late and very late gene expression. This Tortricidae (ClGV) protein is Late expression factor 5 homolog.